A 346-amino-acid chain; its full sequence is Dihydroorotate dehydrogenase (quinone) (346 aa).

FMN is bound by residues 62 to 66 (AGMDK) and threonine 86. A substrate-binding site is contributed by lysine 66. Substrate is bound at residue 111-115 (NRMGF). FMN is bound by residues asparagine 142 and asparagine 175. Position 175 (asparagine 175) interacts with substrate. Catalysis depends on serine 178, which acts as the Nucleophile. Asparagine 180 contacts substrate. Lysine 211 and valine 239 together coordinate FMN. Residue 240–241 (NT) coordinates substrate. FMN is bound by residues glycine 261, glycine 289, and 310–311 (YT).

Belongs to the dihydroorotate dehydrogenase family. Type 2 subfamily. In terms of assembly, monomer. FMN is required as a cofactor.

The protein resides in the cell membrane. The catalysed reaction is (S)-dihydroorotate + a quinone = orotate + a quinol. It functions in the pathway pyrimidine metabolism; UMP biosynthesis via de novo pathway; orotate from (S)-dihydroorotate (quinone route): step 1/1. Catalyzes the conversion of dihydroorotate to orotate with quinone as electron acceptor. The polypeptide is Dihydroorotate dehydrogenase (quinone) (Thermus thermophilus (strain ATCC BAA-163 / DSM 7039 / HB27)).